The sequence spans 279 residues: Phycobilisome rod-core linker polypeptide CpcG1 (279 aa).

The PBS-linker domain occupies 11–189 (SSQNQRVEGY…YWRDRQTLNA (179 aa)).

This sequence belongs to the phycobilisome linker protein family. In terms of assembly, part of the phycobilisome, a hemidiscoidal structure that is composed of two distinct substructures: a core complex and a number of rods radiating from the core.

Its subcellular location is the cellular thylakoid membrane. In terms of biological role, rod-core linker protein required for attachment of phycocyanin to allophycocyanin in cores of phycobilisomes. Functionally, linker polypeptides determine the state of aggregation and the location of the disk-shaped phycobiliprotein units within the phycobilisome and modulate their spectroscopic properties in order to mediate a directed and optimal energy transfer. The polypeptide is Phycobilisome rod-core linker polypeptide CpcG1 (Nostoc sp. (strain PCC 7120 / SAG 25.82 / UTEX 2576)).